A 1834-amino-acid polypeptide reads, in one-letter code: Sodium channel protein type 4 subunit alpha (1834 aa).

The Cytoplasmic portion of the chain corresponds to 1–131; sequence MASSSLPNLV…RSAIKVLIHS (131 aa). An I repeat occupies 113-448; the sequence is MLSPFSIIRR…VVTMAYAEQN (336 aa). Residues 132–150 traverse the membrane as a helical segment; the sequence is LFSMFIMITILPNCVVMTM. The Extracellular portion of the chain corresponds to 151 to 157; sequence SDPPPWP. The chain crosses the membrane as a helical span at residues 158 to 178; sequence IHVENTFTGINTFESLIKMLA. Residues 179 to 192 are Cytoplasmic-facing; the sequence is RGFCIDDFTFLRDP. A helical transmembrane segment spans residues 193-210; that stretch reads WNWLDFSVIMMAYLTEFV. At 211–216 the chain is on the extracellular side; it reads DLGNIS. N-linked (GlcNAc...) asparagine glycosylation is present at asparagine 214. A helical transmembrane segment spans residues 217–233; it reads ALRTFRVLRALKTITVI. The Cytoplasmic segment spans residues 234 to 252; sequence PGLKTIVGALIQSVKKLSD. A helical transmembrane segment spans residues 253–272; it reads VMILTVFCLSVFALVGLQLF. The Extracellular portion of the chain corresponds to 273-385; sequence MGNLRQKCVR…PNYGYTSHDT (113 aa). Cysteine 280 and cysteine 354 form a disulfide bridge. 7 N-linked (GlcNAc...) asparagine glycosylation sites follow: asparagine 288, asparagine 291, asparagine 297, asparagine 303, asparagine 309, asparagine 327, and asparagine 356. A disulfide bridge connects residues cysteine 363 and cysteine 369. The segment at residues 386–410 is an intramembrane region (pore-forming); sequence FSWAFLALFRLMIQDYWENLFQLTL. The Extracellular segment spans residues 411 to 417; that stretch reads RAAGKTY. Residues 418 to 438 form a helical membrane-spanning segment; it reads MIFFVVIIFLGSFYLINLILA. Over 439–572 the chain is Cytoplasmic; that stretch reads VVTMAYAEQN…NIIHLIVMDP (134 aa). The segment at 486-525 is disordered; that stretch reads EGGEAGGDPAHSKDCNGSLDTSPGEKGPPRQSCSADSGVS. The II repeat unit spans residues 554–826; sequence CCTPWVKFKN…QISSWPIKLG (273 aa). The helical transmembrane segment at 573-591 threads the bilayer; that stretch reads FVDLGITICIVLNTLFMAM. Topologically, residues 592–602 are extracellular; sequence EHYPMTEHFDK. Residues 603 to 622 form a helical membrane-spanning segment; sequence VLTVGNLVFTGIFTAEMVLK. The Cytoplasmic portion of the chain corresponds to 623-636; it reads LIALDPYEYFQQGW. A helical transmembrane segment spans residues 637–656; that stretch reads NVFDSIIVTLSWVELGLVNV. Topologically, residues 657 to 658 are extracellular; it reads KG. Residues 659 to 676 form a helical membrane-spanning segment; the sequence is LSVLRSFRLVRSLKLAKS. Residues 677–692 are Cytoplasmic-facing; the sequence is WPTLNMFIRIIGNSGG. The chain crosses the membrane as a helical span at residues 693–711; that stretch reads GLGNLTLVLAIIVVNFSVV. Residues 712 to 740 lie on the Extracellular side of the membrane; the sequence is GMQLFGKNYKECVCKNASDCALPRWKMCD. A disulfide bridge links cysteine 725 with cysteine 731. The segment at residues 741-761 is an intramembrane region (pore-forming); it reads FFHSFLIVLRILCGEWIEPMW. The Extracellular portion of the chain corresponds to 762-772; that stretch reads GFMEVAGQAMF. Residues 773 to 791 traverse the membrane as a helical segment; the sequence is LTVLLMVMVNGNLVDLDLF. The Cytoplasmic segment spans residues 792–1029; it reads LALLLNPLNS…ACFKIVEHHW (238 aa). Disordered regions lie at residues 853 to 886 and 929 to 989; these read GDPG…KDLK and SDLE…QPEE. Residues 860 to 869 are compositionally biased toward acidic residues; that stretch reads EAGEAEESAP. A compositionally biased stretch (basic and acidic residues) spans 870 to 886; the sequence is EDEKKEPPPEDDDKDLK. Composition is skewed to acidic residues over residues 929-945 and 972-989; these read SDLE…FSEP and EDPE…QPEE. The III repeat unit spans residues 1010-1323; the sequence is RGKMWWTLRR…KKYYNAMKKL (314 aa). The helical transmembrane segment at 1030–1047 threads the bilayer; the sequence is FKTFNSSLILLNSGTLAF. The Extracellular segment spans residues 1048-1060; that stretch reads EDIYIEQRRVIRT. The helical transmembrane segment at 1061–1079 threads the bilayer; it reads ILEYADKVFTYIFIMEMLL. Residues 1080 to 1093 lie on the Cytoplasmic side of the membrane; sequence KWVAYGFKVYFTNA. Residues 1094-1112 traverse the membrane as a helical segment; that stretch reads WCWLDFLIVDVSIISLVAN. Over 1113 to 1120 the chain is Extracellular; sequence WLGYSELG. The chain crosses the membrane as a helical span at residues 1121–1139; that stretch reads PIKSLRTLRALRPLRALSR. Topologically, residues 1140–1156 are cytoplasmic; it reads FEGMRVVVNALLGAIPS. A helical transmembrane segment spans residues 1157 to 1176; the sequence is IMNVLLVCLIFWVIFSIMGV. Residues 1177-1227 are Extracellular-facing; that stretch reads NLFAAKIYYFINTTTSERFDISGVNNKSECESLIHTGQVRWLNVKVNYDNV. N-linked (GlcNAc...) asparagine glycosylation is found at asparagine 1188 and asparagine 1202. Residues 1228–1249 constitute an intramembrane region (pore-forming); that stretch reads GLGYLSLLQVATFKGWMDIMYS. The Extracellular segment spans residues 1250–1266; sequence AVDSREQEEQPQYEVNI. The chain crosses the membrane as a helical span at residues 1267-1288; it reads YMYLYFVIFIIFGSFFTINSLI. Over 1289 to 1351 the chain is Cytoplasmic; sequence RLIIVNFNQQ…MVYDFVTKQV (63 aa). Residues 1307–1309 form an important for rapid channel inactivation region; that stretch reads IFM. An IV repeat occupies 1332–1630; the sequence is IPRPQNKIQG…WEKFGPDATQ (299 aa). The chain crosses the membrane as a helical span at residues 1352–1369; the sequence is FDITIMILICLNMVTMMV. Residues 1370-1380 are Extracellular-facing; it reads ETDDQSQLKVD. The helical transmembrane segment at 1381 to 1399 threads the bilayer; sequence ILYNINMVFIIVFTGECVL. At 1400–1411 the chain is on the cytoplasmic side; that stretch reads KMFALRQNYFTV. A helical transmembrane segment spans residues 1412-1429; that stretch reads GWNIFDFVVVILSIVGLA. Residues 1430-1442 lie on the Extracellular side of the membrane; the sequence is LSDLIQKYFVSPT. A helical membrane pass occupies residues 1443 to 1459; the sequence is LFRVIRLARIGRVLRLI. At 1460–1478 the chain is on the cytoplasmic side; that stretch reads RGAKGIRTLLFALMMSLPA. Residues 1479–1496 form a helical membrane-spanning segment; that stretch reads LFNIGLLLILVMFIYSIF. Residues 1497 to 1518 are Extracellular-facing; that stretch reads GMSNFAYVKKESGIDDMFNFET. Residues 1519 to 1541 constitute an intramembrane region (pore-forming); the sequence is FGNSIICLFEITTSAGWDGLLNP. Residues 1542 to 1571 are Extracellular-facing; it reads ILNSGPPDCDPTLENPGTSVRGDCGNPSIG. Cysteine 1550 and cysteine 1565 are joined by a disulfide. The helical transmembrane segment at 1572–1594 threads the bilayer; it reads ICFFCSYIIISFLIVVNMYIAII. At 1595-1834 the chain is on the cytoplasmic side; it reads LENFNVATEE…LHPGVKESLV (240 aa). Residues 1724–1753 form the IQ domain; sequence EEVCAIKIQRAYRRHLLQRSVKQASYMYRH. A disordered region spans residues 1776–1834; that stretch reads MYGRENGNSGVQNKGEERGSTGDAGPTMGLTPINPSDSALPPSPPPGLPLHPGVKESLV.

Belongs to the sodium channel (TC 1.A.1.10) family. Nav1.4/SCN4A subfamily. The Nav1.4 voltage-gated sodium channel consists of an ion-conducting alpha subunit SCN4A which is functional on its own and a regulatory beta subunit SCN1B. SCN1B strongly enhances the presence of SCN4A at the cell surface. SCN1B is also required for rapid channel inactivation and recovery after inactivation. It prevents the decrease of channel activity in response to repetitive, high-frequency depolarizations. Interacts with the syntrophins SNTA1, SNTB1 and SNTB2 (via PDZ domain); probably links SCN4A to the actin cytoskeleton and the extracellular matrix via the dystrophin-associated protein complex and regulates its localization in muscle cells. Interacts with TMEM233; probable regulator of the channel.

It is found in the cell membrane. It carries out the reaction Na(+)(in) = Na(+)(out). Pore-forming subunit of Nav1.4, a voltage-gated sodium (Nav) channel that directly mediates the depolarizing phase of action potentials in excitable membranes. Navs, also called VGSCs (voltage-gated sodium channels) or VDSCs (voltage-dependent sodium channels), operate by switching between closed and open conformations depending on the voltage difference across the membrane. In the open conformation they allow Na(+) ions to selectively pass through the pore, along their electrochemical gradient. The influx of Na+ ions provokes membrane depolarization, initiating the propagation of electrical signals throughout cells and tissues. Highly expressed in skeletal muscles, Nav1.4 generates the action potential crucial for muscle contraction. The protein is Sodium channel protein type 4 subunit alpha of Equus caballus (Horse).